The chain runs to 500 residues: L-arabinose isomerase (500 aa).

Mn(2+) is bound by residues Glu306, Glu333, His350, and His450.

The protein belongs to the arabinose isomerase family. Homohexamer. Mn(2+) is required as a cofactor.

The catalysed reaction is beta-L-arabinopyranose = L-ribulose. Its pathway is carbohydrate degradation; L-arabinose degradation via L-ribulose; D-xylulose 5-phosphate from L-arabinose (bacterial route): step 1/3. Functionally, catalyzes the conversion of L-arabinose to L-ribulose. This Escherichia coli O17:K52:H18 (strain UMN026 / ExPEC) protein is L-arabinose isomerase.